A 258-amino-acid polypeptide reads, in one-letter code: Short-chain dehydrogenase reductase 3c (258 aa).

Residue 12–36 (IITGGASGIGADAARLFTDHGAKVV) coordinates NAD(+). A substrate-binding site is contributed by Ser144. The Proton acceptor role is filled by Tyr156.

It belongs to the short-chain dehydrogenases/reductases (SDR) family.

The polypeptide is Short-chain dehydrogenase reductase 3c (SDR3c) (Arabidopsis thaliana (Mouse-ear cress)).